The sequence spans 101 residues: Large ribosomal subunit protein eL30 (101 aa).

It belongs to the eukaryotic ribosomal protein eL30 family.

The protein is Large ribosomal subunit protein eL30 of Pyrobaculum calidifontis (strain DSM 21063 / JCM 11548 / VA1).